The primary structure comprises 403 residues: MGVTETSTYRDLHLPSLIIGGSFATVAICLSLYSILQHLRFYTNPAEQKWIVSVLFMVPVYATESIISLSNSKFSLPCDILRNCYEAFALYSFGSYLVACLGGERRVVEYLENESKKPLLEEGANESKKKKKKNSFWKFLCDPYVLGRELFVIEKFGLVQYMILKTFCAFLTFLLELLGVYGDGEFKWYYGYPYIVVVLNFSQMWALFCLVQFYNVTHERLKEIKPLAKFISFKAIVFATWWQGFGIALLCYYGILPKEGRFQNGLQDFLICIEMAIAAVAHLFVFPAEPYHYIPVSECGKITAETSKTEVKLEEGGLVETTETQVEASGTSIKESVQDIVIDGGQHVVKDVVLTINQAIGPVEKGVTKIQDTIHQKLLDSDGKEETEVTEEVTVETSVPPKE.

6 helical membrane passes run 16 to 36 (SLII…YSIL), 50 to 70 (WIVS…ISLS), 162 to 182 (MILK…GVYG), 191 to 211 (GYPY…FCLV), 236 to 256 (IVFA…YGIL), and 269 to 289 (FLIC…FPAE). Positions 381 to 403 (SDGKEETEVTEEVTVETSVPPKE) are disordered.

Belongs to the TMEM184 family.

It localises to the membrane. This chain is Protein LAZ1 homolog 2, found in Arabidopsis thaliana (Mouse-ear cress).